A 529-amino-acid chain; its full sequence is UDP-glycosyltransferase (529 aa).

N-linked (GlcNAc...) asparagine glycosylation is found at Asn-70 and Asn-420. The chain crosses the membrane as a helical span at residues 504 to 524 (LDLYLVYIALFAVPVGAVRWI).

It belongs to the glycosyltransferase 28 family.

It localises to the membrane. It carries out the reaction stromemycin aglycone + UDP-alpha-D-glucose = stromemycin + UDP + H(+). The protein operates within mycotoxin biosynthesis. Its function is as follows. UDP-glycosyltransferase; part of the gene cluster that mediates the biosynthesis of stromemycin, a depside C-glucoside with two unsaturated C9 side chains belonging to aromatic polyketide glycosides. Acts as the tailoring enzyme responsible for 3-C-glucosylation of bininalkenylresorcylic acid to yield stromemycin. This Talaromyces amestolkiae protein is UDP-glycosyltransferase.